A 339-amino-acid polypeptide reads, in one-letter code: Glycerol-3-phosphate dehydrogenase [NAD(P)+] (339 aa).

Positions 15, 16, 36, and 110 each coordinate NADPH. Positions 110, 139, and 141 each coordinate sn-glycerol 3-phosphate. Ala143 lines the NADPH pocket. Sn-glycerol 3-phosphate contacts are provided by Lys195, Asp248, Ser258, Arg259, and Asn260. Lys195 acts as the Proton acceptor in catalysis. Arg259 is a binding site for NADPH. The NADPH site is built by Val283 and Glu285.

The protein belongs to the NAD-dependent glycerol-3-phosphate dehydrogenase family.

Its subcellular location is the cytoplasm. It carries out the reaction sn-glycerol 3-phosphate + NAD(+) = dihydroxyacetone phosphate + NADH + H(+). It catalyses the reaction sn-glycerol 3-phosphate + NADP(+) = dihydroxyacetone phosphate + NADPH + H(+). Its pathway is membrane lipid metabolism; glycerophospholipid metabolism. Catalyzes the reduction of the glycolytic intermediate dihydroxyacetone phosphate (DHAP) to sn-glycerol 3-phosphate (G3P), the key precursor for phospholipid synthesis. The sequence is that of Glycerol-3-phosphate dehydrogenase [NAD(P)+] from Salmonella agona (strain SL483).